The following is a 211-amino-acid chain: Probable transcriptional regulatory protein SgaR (211 aa).

A Response regulatory domain is found at 10 to 126; sequence EVSIVDQNPV…VLLEAVVSVA (117 aa). 4-aspartylphosphate is present on Asp-15. An HTH luxR-type domain is found at 141 to 206; that stretch reads NHDPLESLTA…MAVALHVSIN (66 aa). A DNA-binding region (H-T-H motif) is located at residues 165-184; sequence NLQIAARTGISRNTVKYHLK.

Not known. Could act on the sgaA gene expression. The polypeptide is Probable transcriptional regulatory protein SgaR (sgaR) (Hyphomicrobium methylovorum).